We begin with the raw amino-acid sequence, 260 residues long: Eukaryotic translation initiation factor 3 subunit G-2 (260 aa).

Residues 180-258 (CAVRISNLSE…LILSVEWSKP (79 aa)) form the RRM domain.

Belongs to the eIF-3 subunit G family. In terms of assembly, component of the eukaryotic translation initiation factor 3 (eIF-3) complex. The eIF-3 complex interacts with pix.

Its subcellular location is the cytoplasm. Functionally, RNA-binding component of the eukaryotic translation initiation factor 3 (eIF-3) complex, which is involved in protein synthesis of a specialized repertoire of mRNAs and, together with other initiation factors, stimulates binding of mRNA and methionyl-tRNAi to the 40S ribosome. The eIF-3 complex specifically targets and initiates translation of a subset of mRNAs involved in cell proliferation. This subunit can bind 18S rRNA. This Drosophila grimshawi (Hawaiian fruit fly) protein is Eukaryotic translation initiation factor 3 subunit G-2.